Reading from the N-terminus, the 135-residue chain is Transcriptional activator protein (135 aa).

Residues 17-32 carry the Nuclear localization signal motif; it reads KVTHRQVKKRAIRRRR. A zinc finger lies at 37 to 54; the sequence is CGCSYYLHINCFNHGFTH. The span at 77-88 shows a compositional bias: polar residues; that stretch reads VFHNHQAPTTTI. The disordered stretch occupies residues 77–117; it reads VFHNHQAPTTTIPAEPGHHNSPGSIQSQPEEGAGDSQMFSQ. The tract at residues 120–135 is transactivation; it reads DLDNLTASDWSFLKGL.

Belongs to the geminiviridae transcriptional activator protein family. As to quaternary structure, monomer. Homodimer. Homooligomer. Self-interaction correlates with nuclear localization and efficient activation of transcription. Monomers suppress local silencing by interacting with and inactivating host adenosine kinase 2 (ADK2) in the cytoplasm. Interacts with and inhibits host SNF1 kinase. Binds to ssDNA. In terms of processing, phosphorylated.

It localises to the host nucleus. It is found in the host cytoplasm. Its function is as follows. Strong activator of the late viral genes promoters. Enhances the expression of the capsid protein and nuclear shuttle protein. Acts as a suppressor of RNA-mediated gene silencing, also known as post-transcriptional gene silencing (PTGS), a mechanism of plant viral defense that limits the accumulation of viral RNAs. Suppresses the host RNA silencing by inhibiting adenosine kinase 2 (ADK2), a kinase involved in a general methylation pathway. Also suppresses the host basal defense by interacting with and inhibiting SNF1 kinase, a key regulator of cell metabolism implicated in innate antiviral defense. Determines pathogenicity. The polypeptide is Transcriptional activator protein (Hewittia sublobata (Coralbush)).